The sequence spans 88 residues: Protein K3 (88 aa).

Positions 8 to 82 (LPNAGDVIKG…TKGYIDVNYK (75 aa)) constitute an S1 motif domain. Binding to host EIF2AK2/PKR stretches follow at residues 43–53 (SVKMHMDRYVE) and 74–79 (KGYIDV).

It belongs to the poxviridae K3 protein family. In terms of assembly, interacts with host EIF2AK2/PKR kinase.

In terms of biological role, viral mimic of EIF2S1/eIF-2alpha that acts as a pseudosubstrate for EIF2AK2/PKR kinase. Inhibits therefore EIF2S1/eIF-2alpha phosphorylation by host EIF2AK2/PKR kinase and prevents protein synthesis shutoff. Determinant of host species specificity. This Vaccinia virus (strain Western Reserve) (VACV) protein is Protein K3.